A 305-amino-acid polypeptide reads, in one-letter code: PI-PLC X domain-containing protein 1 (305 aa).

The first 24 residues, 1 to 24 (MSMSTLRHFLWLGALLLATIQVSA), serve as a signal peptide directing secretion. One can recognise a PI-PLC X-box domain in the interval 25-189 (LPTAQDLICN…RLIVFVDSKA (165 aa)). Residues H53 and H97 contribute to the active site. A glycan (N-linked (GlcNAc...) asparagine) is linked at N237.

The protein resides in the secreted. The chain is PI-PLC X domain-containing protein 1 from Arthroderma benhamiae (strain ATCC MYA-4681 / CBS 112371) (Trichophyton mentagrophytes).